Reading from the N-terminus, the 431-residue chain is Enolase (431 aa).

Position 163 (Gln-163) interacts with (2R)-2-phosphoglycerate. Glu-205 acts as the Proton donor in catalysis. Residues Asp-242, Glu-283, and Asp-310 each coordinate Mg(2+). Positions 335, 364, 365, and 386 each coordinate (2R)-2-phosphoglycerate. The active-site Proton acceptor is Lys-335.

Belongs to the enolase family. The cofactor is Mg(2+).

The protein localises to the cytoplasm. It localises to the secreted. It is found in the cell surface. It carries out the reaction (2R)-2-phosphoglycerate = phosphoenolpyruvate + H2O. Its pathway is carbohydrate degradation; glycolysis; pyruvate from D-glyceraldehyde 3-phosphate: step 4/5. Its function is as follows. Catalyzes the reversible conversion of 2-phosphoglycerate (2-PG) into phosphoenolpyruvate (PEP). It is essential for the degradation of carbohydrates via glycolysis. This chain is Enolase, found in Kineococcus radiotolerans (strain ATCC BAA-149 / DSM 14245 / SRS30216).